The sequence spans 344 residues: HTH-type transcriptional regulator XC_2801 (344 aa).

The region spanning 3–60 (HDLNDTLIFVKVVEQGSFIAAANSLGLPKTTVSRKVQELETRLGARLLHRTTRRIGLT) is the HTH lysR-type domain. The H-T-H motif DNA-binding region spans 20 to 39 (FIAAANSLGLPKTTVSRKVQ).

This sequence belongs to the LysR transcriptional regulatory family. Interacts with the cyclic di-GMP effector XC_3703.

Activity is regulated by cyclic di-GMP. Cyclic di-GMP specifically binds to XC_3703, which inhibits the interaction of the XC_2801-XC_3703 complex with DNA and prevents the transcription of the target genes. Transcriptional regulator that directly or indirectly regulates the expression of virulence-related genes, including flhB, aaeA, fliL and flgG. Binds to the promoter of the target genes only in the presence of XC_3703. This Xanthomonas campestris pv. campestris (strain 8004) protein is HTH-type transcriptional regulator XC_2801.